The following is a 635-amino-acid chain: Biosynthetic arginine decarboxylase (635 aa).

Lys101 bears the N6-(pyridoxal phosphate)lysine mark. 284–294 contacts substrate; sequence VDVGGGLGVDY.

Belongs to the Orn/Lys/Arg decarboxylase class-II family. SpeA subfamily. The cofactor is Mg(2+). Pyridoxal 5'-phosphate is required as a cofactor.

It catalyses the reaction L-arginine + H(+) = agmatine + CO2. It functions in the pathway amine and polyamine biosynthesis; agmatine biosynthesis; agmatine from L-arginine: step 1/1. In terms of biological role, catalyzes the biosynthesis of agmatine from arginine. This is Biosynthetic arginine decarboxylase from Tolumonas auensis (strain DSM 9187 / NBRC 110442 / TA 4).